Reading from the N-terminus, the 212-residue chain is Protein Nef (212 aa).

Gly-2 carries the N-myristoyl glycine; by host lipid modification. Ser-6 bears the Phosphoserine; by host mark. The interval 67–71 (EEEEE) is acidic; interacts with host PACS1 and PACS2; stabilizes the interaction of NEF/MHC-I with host AP1M1; necessary for MHC-I internalization. Positions 75-84 (PVRPQVPLRP) are SH3-binding; interaction with Src family tyrosine kinases. A PxxP; stabilizes the interaction of NEF/MHC-I with host AP1M1; necessary for MHC-I internalization motif is present at residues 78–81 (PQVP). Residues 114 to 130 (DILDLWMYHTQGILPDW) are mediates dimerization, Nef-PTE1 interaction. Residues 154–186 (LSAEEVEEANEGDNNALLHPICQHGADDDHKEV) form a binding to ATP6V1H region. The short motif at 170–171 (LL) is the Dileucine internalization motif; necessary for CD4 internalization element. The short motif at 180–181 (DD) is the Diacidic; necessary for CD4 internalization element.

It belongs to the lentivirus primate group Nef protein family. As to quaternary structure, monomer; cytosolic form. Homodimer; membrane bound form. Interacts with Nef associated p21-activated kinase (PAK2); this interaction activates PAK2. Associates with the Nef-MHC-I-AP1 complex; this complex is required for MHC-I internalization. Interacts (via C-terminus) with host PI3-kinase. Interacts with host PACS1; this interaction seems to be weak. Interacts with host PACS2. Interacts with host LCK and MAPK3; these interactions inhibit the kinase activity of the latter. Interacts with host ATP6V1H; this interaction may play a role in CD4 endocytosis. Associates with the CD4-Nef-AP2 complex; this complex is required for CD4 internalization. Interacts with host AP2 subunit alpha and AP2 subunit sigma2. Interacts with TCR-zeta chain; this interaction up-regulates the Fas ligand (FasL) surface expression. Interacts with host HCK, LYN, and SRC; these interactions activate the Src family kinases. Interacts with MAP3K5; this interaction inhibits the Fas and TNFR-mediated death signals. Interacts with beta-COP and PTE1. Interacts with human RACK1; this increases Nef phosphorylation by PKC. Interacts with TP53; this interaction decreases the half-life of TP53, protecting the infected cell against p53-mediated apoptosis. The virion-associated Nef proteins are cleaved by the viral protease to release the soluble C-terminal core protein. Nef is probably cleaved concomitantly with viral structural proteins on maturation of virus particles. Post-translationally, myristoylated. In terms of processing, phosphorylated on serine residues, probably by host PKCdelta and theta.

It is found in the host cell membrane. Its subcellular location is the virion. The protein localises to the secreted. It localises to the host Golgi apparatus membrane. In terms of biological role, factor of infectivity and pathogenicity, required for optimal virus replication. Alters numerous pathways of T-lymphocyte function and down-regulates immunity surface molecules in order to evade host defense and increase viral infectivity. Alters the functionality of other immunity cells, like dendritic cells, monocytes/macrophages and NK cells. In infected CD4(+) T-lymphocytes, down-regulates the surface MHC-I, mature MHC-II, CD4, CD28, CCR5 and CXCR4 molecules. Mediates internalization and degradation of host CD4 through the interaction of with the cytoplasmic tail of CD4, the recruitment of AP-2 (clathrin adapter protein complex 2), internalization through clathrin coated pits, and subsequent transport to endosomes and lysosomes for degradation. Diverts host MHC-I molecules to the trans-Golgi network-associated endosomal compartments by an endocytic pathway to finally target them for degradation. MHC-I down-regulation may involve AP-1 (clathrin adapter protein complex 1) or possibly Src family kinase-ZAP70/Syk-PI3K cascade recruited by PACS2. In consequence infected cells are masked for immune recognition by cytotoxic T-lymphocytes. Decreasing the number of immune receptors also prevents reinfection by more HIV particles (superinfection). Down-regulates host SERINC3 and SERINC5 thereby excluding these proteins from the viral particles. Virion infectivity is drastically higher when SERINC3 or SERINC5 are excluded from the viral envelope, because these host antiviral proteins impair the membrane fusion event necessary for subsequent virion penetration. Functionally, bypasses host T-cell signaling by inducing a transcriptional program nearly identical to that of anti-CD3 cell activation. Interaction with TCR-zeta chain up-regulates the Fas ligand (FasL). Increasing surface FasL molecules and decreasing surface MHC-I molecules on infected CD4(+) cells send attacking cytotoxic CD8+ T-lymphocytes into apoptosis. Its function is as follows. Plays a role in optimizing the host cell environment for viral replication without causing cell death by apoptosis. Protects the infected cells from apoptosis in order to keep them alive until the next virus generation is ready to strike. Inhibits the Fas and TNFR-mediated death signals by blocking MAP3K5/ASK1. Decreases the half-life of TP53, protecting the infected cell against p53-mediated apoptosis. Inhibits the apoptotic signals regulated by the Bcl-2 family proteins through the formation of a Nef/PI3-kinase/PAK2 complex that leads to activation of PAK2 and induces phosphorylation of host BAD. In terms of biological role, extracellular Nef protein targets CD4(+) T-lymphocytes for apoptosis by interacting with CXCR4 surface receptors. This Human immunodeficiency virus type 1 group N (isolate YBF30) (HIV-1) protein is Protein Nef.